We begin with the raw amino-acid sequence, 353 residues long: RNA 3'-terminal phosphate cyclase (353 aa).

ATP is bound by residues Gln103 and 297–301 (HLADQ). Catalysis depends on His322, which acts as the Tele-AMP-histidine intermediate.

The protein belongs to the RNA 3'-terminal cyclase family. Type 1 subfamily.

The protein localises to the cytoplasm. It catalyses the reaction a 3'-end 3'-phospho-ribonucleotide-RNA + ATP = a 3'-end 2',3'-cyclophospho-ribonucleotide-RNA + AMP + diphosphate. Catalyzes the conversion of 3'-phosphate to a 2',3'-cyclic phosphodiester at the end of RNA. The mechanism of action of the enzyme occurs in 3 steps: (A) adenylation of the enzyme by ATP; (B) transfer of adenylate to an RNA-N3'P to produce RNA-N3'PP5'A; (C) and attack of the adjacent 2'-hydroxyl on the 3'-phosphorus in the diester linkage to produce the cyclic end product. The biological role of this enzyme is unknown but it is likely to function in some aspects of cellular RNA processing. The polypeptide is RNA 3'-terminal phosphate cyclase (Salmonella heidelberg (strain SL476)).